The following is a 460-amino-acid chain: Argininosuccinate lyase (460 aa).

This sequence belongs to the lyase 1 family. Argininosuccinate lyase subfamily.

The protein localises to the cytoplasm. It catalyses the reaction 2-(N(omega)-L-arginino)succinate = fumarate + L-arginine. It participates in amino-acid biosynthesis; L-arginine biosynthesis; L-arginine from L-ornithine and carbamoyl phosphate: step 3/3. The sequence is that of Argininosuccinate lyase from Actinobacillus succinogenes (strain ATCC 55618 / DSM 22257 / CCUG 43843 / 130Z).